A 177-amino-acid polypeptide reads, in one-letter code: Nucleoside triphosphate/diphosphate phosphatase (177 aa).

Catalysis depends on arginine 23, which acts as the Proton donor. Residues asparagine 87, aspartate 103, aspartate 105, aspartate 107, aspartate 120, and glutamate 123 each coordinate Mg(2+).

It belongs to the Ntdp family. Mg(2+) is required as a cofactor.

It carries out the reaction a ribonucleoside 5'-triphosphate + H2O = a ribonucleoside 5'-diphosphate + phosphate + H(+). The enzyme catalyses a ribonucleoside 5'-diphosphate + H2O = a ribonucleoside 5'-phosphate + phosphate + H(+). Has nucleoside phosphatase activity towards nucleoside triphosphates and nucleoside diphosphates. In Streptococcus pneumoniae (strain ATCC 700669 / Spain 23F-1), this protein is Nucleoside triphosphate/diphosphate phosphatase.